Reading from the N-terminus, the 551-residue chain is Glucose-6-phosphate isomerase (551 aa).

Residues 161 to 162 (GS), 212 to 217 (SKTFTT), Gln-356, Glu-360, His-391, and Lys-516 contribute to the D-glucose 6-phosphate site. Residue Glu-360 is the Proton donor of the active site. Active-site residues include His-391 and Lys-516.

It belongs to the GPI family. In terms of assembly, homodimer.

Its subcellular location is the cytoplasm. The protein localises to the cytosol. It catalyses the reaction alpha-D-glucose 6-phosphate = beta-D-fructose 6-phosphate. It functions in the pathway carbohydrate degradation; glycolysis; D-glyceraldehyde 3-phosphate and glycerone phosphate from D-glucose: step 2/4. In the cytoplasm, catalyzes the conversion of glucose-6-phosphate to fructose-6-phosphate, the second step in glycolysis, and the reverse reaction during gluconeogenesis. The chain is Glucose-6-phosphate isomerase (gpi1) from Agaricus bisporus (White button mushroom).